The chain runs to 339 residues: Ketol-acid reductoisomerase (NADP(+)) (339 aa).

A KARI N-terminal Rossmann domain is found at 1 to 182 (MRVYYDRDAD…GGGRAGIIET (182 aa)). NADP(+)-binding positions include 24-27 (YGSQ), Arg48, Ser51, and 83-86 (DEGQ). The active site involves His108. Gly134 contacts NADP(+). The KARI C-terminal knotted domain occupies 183–328 (TFKEEVETDL…EKLRAMMPWI (146 aa)). Residues Asp191, Glu195, Glu227, and Glu231 each coordinate Mg(2+). Ser252 provides a ligand contact to substrate.

Belongs to the ketol-acid reductoisomerase family. Requires Mg(2+) as cofactor.

It catalyses the reaction (2R)-2,3-dihydroxy-3-methylbutanoate + NADP(+) = (2S)-2-acetolactate + NADPH + H(+). It carries out the reaction (2R,3R)-2,3-dihydroxy-3-methylpentanoate + NADP(+) = (S)-2-ethyl-2-hydroxy-3-oxobutanoate + NADPH + H(+). The protein operates within amino-acid biosynthesis; L-isoleucine biosynthesis; L-isoleucine from 2-oxobutanoate: step 2/4. It functions in the pathway amino-acid biosynthesis; L-valine biosynthesis; L-valine from pyruvate: step 2/4. Its function is as follows. Involved in the biosynthesis of branched-chain amino acids (BCAA). Catalyzes an alkyl-migration followed by a ketol-acid reduction of (S)-2-acetolactate (S2AL) to yield (R)-2,3-dihydroxy-isovalerate. In the isomerase reaction, S2AL is rearranged via a Mg-dependent methyl migration to produce 3-hydroxy-3-methyl-2-ketobutyrate (HMKB). In the reductase reaction, this 2-ketoacid undergoes a metal-dependent reduction by NADPH to yield (R)-2,3-dihydroxy-isovalerate. This chain is Ketol-acid reductoisomerase (NADP(+)), found in Gluconobacter oxydans (strain 621H) (Gluconobacter suboxydans).